Here is a 404-residue protein sequence, read N- to C-terminus: Keratin, type I cuticular Ha3-I (404 aa).

The tract at residues 1–56 (MPYNCCLPAMSCRTSCSSRPCVPPSCHGCTLPGACNIPANVGNCNWFCEGSFNGNE) is head. Residues 56 to 367 (EKETMQFLND…GLLESEDCKL (312 aa)) enclose the IF rod domain. A coil 1A region spans residues 57–91 (KETMQFLNDRLASYMEKVRQLERENAELECRIQER). The tract at residues 92–102 (NQQQDPLVCPA) is linker 1. The coil 1B stretch occupies residues 103–203 (YQAYFRTIEE…HEQEVNTLRC (101 aa)). Positions 204-219 (QLGDRLNVEVDAAPTV) are linker 12. Residues 220-363 (DLNRVLNETR…NTYRGLLESE (144 aa)) form a coil 2 region. The interval 364–404 (DCKLPCNPCATTNACDKPIGPCVPNPCVTRPRCGPCNTFVR) is tail.

This sequence belongs to the intermediate filament family.

This Mus musculus (Mouse) protein is Keratin, type I cuticular Ha3-I.